Reading from the N-terminus, the 447-residue chain is MKPVIALVGRPNVGKSTIFNRLTKTRDAIVADFAGLTRDRHYGNGKLGSHEYIVIDTGGFEPDAASGIYKEMAKQTRQAVAEADVVIFVVDARAGISAQDHDIANFLRKLGKPTVLTANKAEGMTEGVQFSEFFELGLGEVLPVSASHGQGMRSLVDLALAPLHLADPDEEAEPQDPSVIRLAVAGRPNVGKSTLINTWLGEERLVSFDLPGTTRDAISVPFERAGQKFELIDTAGLRRKGKVFEAIEKFSVVKTLQAIEGANVVLLLLDATQGVTDQDAHIAGYILESGRAVVLAINKWDAVDAYQRETLERSIETRLAFLKFASIHKISAIKRQGLAPVWKSIVQAHASANRKMSTPVLTRLLLEAVQFQQPQRSGMFRPKMRYAHQGGMNPPIIIIHGNSLEHVTEAYKRYLEGRFRKEFDLVGTPMRIQMKSSHNPFTDKDSA.

EngA-type G domains lie at 3–167 (PVIA…HLAD) and 180–353 (IRLA…ASAN). Residues 9 to 16 (GRPNVGKS), 56 to 60 (DTGGF), 119 to 122 (NKAE), 186 to 193 (GRPNVGKS), 233 to 237 (DTAGL), and 298 to 301 (NKWD) each bind GTP. Positions 354-438 (RKMSTPVLTR…PMRIQMKSSH (85 aa)) constitute a KH-like domain.

Belongs to the TRAFAC class TrmE-Era-EngA-EngB-Septin-like GTPase superfamily. EngA (Der) GTPase family. As to quaternary structure, associates with the 50S ribosomal subunit.

Functionally, GTPase that plays an essential role in the late steps of ribosome biogenesis. This chain is GTPase Der, found in Polaromonas sp. (strain JS666 / ATCC BAA-500).